Here is a 379-residue protein sequence, read N- to C-terminus: F-box protein At5g18160 (379 aa).

Residues 1–26 (MDKQDEKKQGTTKSSSTLTTRCSHGN) form a disordered region. A compositionally biased stretch (polar residues) spans 11-26 (TTKSSSTLTTRCSHGN). An F-box domain is found at 28–74 (ISQSNSIPLDITIEILSRLPAKSIVRSRSVSKLWSSITTTPEFIKHR).

The chain is F-box protein At5g18160 from Arabidopsis thaliana (Mouse-ear cress).